Here is a 308-residue protein sequence, read N- to C-terminus: Ribosomal RNA small subunit methyltransferase H (308 aa).

S-adenosyl-L-methionine contacts are provided by residues 36–38 (GGH), Asp55, Phe82, Asp103, and Gln110.

It belongs to the methyltransferase superfamily. RsmH family.

Its subcellular location is the cytoplasm. The enzyme catalyses cytidine(1402) in 16S rRNA + S-adenosyl-L-methionine = N(4)-methylcytidine(1402) in 16S rRNA + S-adenosyl-L-homocysteine + H(+). In terms of biological role, specifically methylates the N4 position of cytidine in position 1402 (C1402) of 16S rRNA. The polypeptide is Ribosomal RNA small subunit methyltransferase H (Helicobacter pylori (strain J99 / ATCC 700824) (Campylobacter pylori J99)).